An 86-amino-acid polypeptide reads, in one-letter code: UPF0335 protein BR1752/BS1330_I1746 (86 aa).

The protein belongs to the UPF0335 family.

In Brucella suis biovar 1 (strain 1330), this protein is UPF0335 protein BR1752/BS1330_I1746.